We begin with the raw amino-acid sequence, 155 residues long: Ribosome maturation factor RimP (155 aa).

It belongs to the RimP family.

The protein localises to the cytoplasm. Required for maturation of 30S ribosomal subunits. This Prochlorococcus marinus (strain AS9601) protein is Ribosome maturation factor RimP.